Reading from the N-terminus, the 348-residue chain is Dihydroorotase (348 aa).

His17 and His19 together coordinate Zn(2+). Residues 19 to 21 (HLR) and Asn45 each bind substrate. The Zn(2+) site is built by Lys103, His140, and His178. Lys103 bears the N6-carboxylysine mark. Position 140 (His140) interacts with substrate. Leu223 is a binding site for substrate. Asp251 is a Zn(2+) binding site. Asp251 is an active-site residue. Substrate-binding residues include His255 and Ala267.

The protein belongs to the metallo-dependent hydrolases superfamily. DHOase family. Class II DHOase subfamily. In terms of assembly, homodimer. The cofactor is Zn(2+).

The catalysed reaction is (S)-dihydroorotate + H2O = N-carbamoyl-L-aspartate + H(+). Its pathway is pyrimidine metabolism; UMP biosynthesis via de novo pathway; (S)-dihydroorotate from bicarbonate: step 3/3. Its function is as follows. Catalyzes the reversible cyclization of carbamoyl aspartate to dihydroorotate. This is Dihydroorotase from Shigella dysenteriae serotype 1 (strain Sd197).